The chain runs to 71 residues: Large ribosomal subunit protein uL30 (71 aa).

The protein belongs to the universal ribosomal protein uL30 family. Part of the 50S ribosomal subunit.

This chain is Large ribosomal subunit protein uL30, found in Mycolicibacterium paratuberculosis (strain ATCC BAA-968 / K-10) (Mycobacterium paratuberculosis).